The sequence spans 507 residues: Rhomboid protease GluP (507 aa).

The next 5 membrane-spanning stretches (helical) occupy residues Phe179–Gly199, Ile229–Gly249, Phe261–Pro281, Pro283–Leu303, and Thr312–Ser332. The active-site Nucleophile is Ser288. His339 acts as the Charge relay system in catalysis. 2 helical membrane-spanning segments follow: residues Ile340–Ala360 and Leu365–Ser385. TPR repeat units follow at residues Ala424–Asp457 and His458–Glu491.

It belongs to the peptidase S54 family.

It localises to the cell membrane. The catalysed reaction is Cleaves type-1 transmembrane domains using a catalytic dyad composed of serine and histidine that are contributed by different transmembrane domains.. With respect to regulation, inhibited by dichloroisocoumarin (DCI) and N-p-tosyl-L-phenylalanine chloromethyl ketone (TPCK), but not by other serine protease inhibitors such as sulfonyl fluoride PMSF and 4-(2-aminoethyl)benzenesulfonyl fluoride (AEBSF). In terms of biological role, rhomboid-type serine protease that catalyzes intramembrane proteolysis. Important for normal cell division and sporulation. May act as a glucose exporter. The sequence is that of Rhomboid protease GluP (gluP) from Bacillus subtilis (strain 168).